The following is a 62-amino-acid chain: Ribulose bisphosphate carboxylase/oxygenase activase, chloroplastic (62 aa).

It belongs to the RuBisCO activase family.

Its subcellular location is the plastid. It is found in the chloroplast stroma. Its function is as follows. Activation of RuBisCO (ribulose-1,5-bisphosphate carboxylase/oxygenase; EC 4.1.1.39) involves the ATP-dependent carboxylation of the epsilon-amino group of lysine leading to a carbamate structure. The sequence is that of Ribulose bisphosphate carboxylase/oxygenase activase, chloroplastic from Vitis sp. (Grape).